The primary structure comprises 299 residues: ATP synthase gamma chain (299 aa).

The protein belongs to the ATPase gamma chain family. In terms of assembly, F-type ATPases have 2 components, CF(1) - the catalytic core - and CF(0) - the membrane proton channel. CF(1) has five subunits: alpha(3), beta(3), gamma(1), delta(1), epsilon(1). CF(0) has three main subunits: a, b and c.

It is found in the cell membrane. Produces ATP from ADP in the presence of a proton gradient across the membrane. The gamma chain is believed to be important in regulating ATPase activity and the flow of protons through the CF(0) complex. The chain is ATP synthase gamma chain from Clavibacter michiganensis subsp. michiganensis (strain NCPPB 382).